Reading from the N-terminus, the 280-residue chain is Vitamin B12-binding protein (280 aa).

The first 27 residues, 1-27 (MMPLGLFPLPRAAAVLLISLLTLPAQA), serve as a signal peptide directing secretion. The region spanning 30–277 (RVISLSPSTT…QMASIPTPVA (248 aa)) is the Fe/B12 periplasmic-binding domain. Tyr-57 provides a ligand contact to cyanocob(III)alamin. A disulfide bridge links Cys-190 with Cys-266.

Belongs to the BtuF family. In terms of assembly, the complex is composed of two ATP-binding proteins (BtuD), two transmembrane proteins (BtuC) and a solute-binding protein (BtuF).

The protein resides in the periplasm. In terms of biological role, part of the ABC transporter complex BtuCDF involved in vitamin B12 import. Binds vitamin B12 and delivers it to the periplasmic surface of BtuC. This Yersinia pseudotuberculosis serotype O:3 (strain YPIII) protein is Vitamin B12-binding protein.